The chain runs to 546 residues: Phosphomethylpyrimidine synthase (546 aa).

Residues N145, M174, Y203, H239, S259–G261, D300–R303, and E339 contribute to the substrate site. H343 contributes to the Zn(2+) binding site. Y366 provides a ligand contact to substrate. Residue H407 coordinates Zn(2+). Positions 487, 490, and 495 each coordinate [4Fe-4S] cluster.

This sequence belongs to the ThiC family. Requires [4Fe-4S] cluster as cofactor.

It carries out the reaction 5-amino-1-(5-phospho-beta-D-ribosyl)imidazole + S-adenosyl-L-methionine = 4-amino-2-methyl-5-(phosphooxymethyl)pyrimidine + CO + 5'-deoxyadenosine + formate + L-methionine + 3 H(+). It functions in the pathway cofactor biosynthesis; thiamine diphosphate biosynthesis. Its function is as follows. Catalyzes the synthesis of the hydroxymethylpyrimidine phosphate (HMP-P) moiety of thiamine from aminoimidazole ribotide (AIR) in a radical S-adenosyl-L-methionine (SAM)-dependent reaction. The polypeptide is Phosphomethylpyrimidine synthase (Mycobacterium marinum (strain ATCC BAA-535 / M)).